The following is a 451-amino-acid chain: Phosphoglucosamine mutase (451 aa).

Ser-102 (phosphoserine intermediate) is an active-site residue. Mg(2+)-binding residues include Ser-102, Asp-243, Asp-245, and Asp-247. Ser-102 carries the post-translational modification Phosphoserine.

Belongs to the phosphohexose mutase family. Mg(2+) serves as cofactor. Post-translationally, activated by phosphorylation.

It catalyses the reaction alpha-D-glucosamine 1-phosphate = D-glucosamine 6-phosphate. In terms of biological role, catalyzes the conversion of glucosamine-6-phosphate to glucosamine-1-phosphate. The chain is Phosphoglucosamine mutase from Chelativorans sp. (strain BNC1).